Reading from the N-terminus, the 247-residue chain is Pleckstrin homology domain-containing family F member 2 (247 aa).

Residues 35 to 131 enclose the PH domain; the sequence is VLIGEGVLTK…WMSHINKCVS (97 aa). The FYVE-type zinc finger occupies 152–212; sequence DSEATVCMRC…VCEFCYKQLS (61 aa). Residues cysteine 158, cysteine 161, cysteine 175, cysteine 178, cysteine 183, cysteine 186, cysteine 204, and cysteine 207 each coordinate Zn(2+). The segment at 213-247 is disordered; that stretch reads TGATLPPRSDSYSRQGSDFGSNNISDDDDDDDSSD. Polar residues predominate over residues 222–236; the sequence is DSYSRQGSDFGSNNI. A compositionally biased stretch (acidic residues) spans 237-247; sequence SDDDDDDDSSD.

It localises to the early endosome membrane. The protein localises to the endoplasmic reticulum. Its function is as follows. May play a role in early endosome fusion upstream of RAB5, hence regulating receptor trafficking and fluid-phase transport. Enhances cellular sensitivity to TNF-induced apoptosis. The polypeptide is Pleckstrin homology domain-containing family F member 2 (plekhf2) (Danio rerio (Zebrafish)).